A 337-amino-acid chain; its full sequence is Tetraacyldisaccharide 4'-kinase (337 aa).

Position 55-62 (55-62 (NAGGTGKT)) interacts with ATP.

This sequence belongs to the LpxK family.

The catalysed reaction is a lipid A disaccharide + ATP = a lipid IVA + ADP + H(+). Its pathway is glycolipid biosynthesis; lipid IV(A) biosynthesis; lipid IV(A) from (3R)-3-hydroxytetradecanoyl-[acyl-carrier-protein] and UDP-N-acetyl-alpha-D-glucosamine: step 6/6. In terms of biological role, transfers the gamma-phosphate of ATP to the 4'-position of a tetraacyldisaccharide 1-phosphate intermediate (termed DS-1-P) to form tetraacyldisaccharide 1,4'-bis-phosphate (lipid IVA). The polypeptide is Tetraacyldisaccharide 4'-kinase (Dinoroseobacter shibae (strain DSM 16493 / NCIMB 14021 / DFL 12)).